The primary structure comprises 124 residues: Small ribosomal subunit protein uS12 (124 aa).

A disordered region spans residues 1 to 25 (MPTINQLIRKPRKSQKEKTASPALQ). At D89 the chain carries 3-methylthioaspartic acid.

The protein belongs to the universal ribosomal protein uS12 family. Part of the 30S ribosomal subunit. Contacts proteins S8 and S17. May interact with IF1 in the 30S initiation complex.

Functionally, with S4 and S5 plays an important role in translational accuracy. Interacts with and stabilizes bases of the 16S rRNA that are involved in tRNA selection in the A site and with the mRNA backbone. Located at the interface of the 30S and 50S subunits, it traverses the body of the 30S subunit contacting proteins on the other side and probably holding the rRNA structure together. The combined cluster of proteins S8, S12 and S17 appears to hold together the shoulder and platform of the 30S subunit. In Borrelia duttonii (strain Ly), this protein is Small ribosomal subunit protein uS12.